The primary structure comprises 226 residues: ATP synthase F(0) complex subunit a (226 aa).

5 helical membrane-spanning segments follow: residues 5 to 25 (LFAP…LIII), 68 to 88 (WSLM…LGML), 97 to 117 (QLSM…TTGF), 136 to 156 (FLIP…PVAW), and 189 to 209 (AFIT…VALI).

The protein belongs to the ATPase A chain family. As to quaternary structure, component of the ATP synthase complex composed at least of ATP5F1A/subunit alpha, ATP5F1B/subunit beta, ATP5MC1/subunit c (homooctomer), MT-ATP6/subunit a, MT-ATP8/subunit 8, ATP5ME/subunit e, ATP5MF/subunit f, ATP5MG/subunit g, ATP5MK/subunit k, ATP5MJ/subunit j, ATP5F1C/subunit gamma, ATP5F1D/subunit delta, ATP5F1E/subunit epsilon, ATP5PF/subunit F6, ATP5PB/subunit b, ATP5PD/subunit d, ATP5PO/subunit OSCP. ATP synthase complex consists of a soluble F(1) head domain (subunits alpha(3) and beta(3)) - the catalytic core - and a membrane F(0) domain - the membrane proton channel (subunits c, a, 8, e, f, g, k and j). These two domains are linked by a central stalk (subunits gamma, delta, and epsilon) rotating inside the F1 region and a stationary peripheral stalk (subunits F6, b, d, and OSCP). Interacts with DNAJC30; interaction is direct.

It is found in the mitochondrion inner membrane. The catalysed reaction is H(+)(in) = H(+)(out). Subunit a, of the mitochondrial membrane ATP synthase complex (F(1)F(0) ATP synthase or Complex V) that produces ATP from ADP in the presence of a proton gradient across the membrane which is generated by electron transport complexes of the respiratory chain. ATP synthase complex consist of a soluble F(1) head domain - the catalytic core - and a membrane F(1) domain - the membrane proton channel. These two domains are linked by a central stalk rotating inside the F(1) region and a stationary peripheral stalk. During catalysis, ATP synthesis in the catalytic domain of F(1) is coupled via a rotary mechanism of the central stalk subunits to proton translocation. With the subunit c (ATP5MC1), forms the proton-conducting channel in the F(0) domain, that contains two crucial half-channels (inlet and outlet) that facilitate proton movement from the mitochondrial intermembrane space (IMS) into the matrix. Protons are taken up via the inlet half-channel and released through the outlet half-channel, following a Grotthuss mechanism. The sequence is that of ATP synthase F(0) complex subunit a from Balaenoptera physalus (Fin whale).